A 318-amino-acid polypeptide reads, in one-letter code: N-succinylornithine carbamoyltransferase (318 aa).

Carbamoyl phosphate contacts are provided by residues 47 to 50, Trp75, and Arg110; that span reads SLRT. Glu142 lines the N(2)-succinyl-L-ornithine pocket. 147–150 serves as a coordination point for carbamoyl phosphate; sequence HPLQ. N(2)-succinyl-L-ornithine contacts are provided by His176 and Lys236. Carbamoyl phosphate is bound at residue 274–275; the sequence is CL. Residue Arg278 coordinates N(2)-succinyl-L-ornithine. Arg302 provides a ligand contact to carbamoyl phosphate.

The protein belongs to the aspartate/ornithine carbamoyltransferase superfamily. SOTCase family. In terms of assembly, homotrimer.

The catalysed reaction is N(2)-succinyl-L-ornithine + carbamoyl phosphate = N(2)-succinyl-L-citrulline + phosphate + H(+). It functions in the pathway amino-acid biosynthesis; L-arginine biosynthesis. Catalyzes the transfer of the carbamoyl group from carbamoyl phosphate to the delta-amino group of N(2)-succinyl-L-ornithine to produce N(2)-succinyl-L-citrulline. Is essential for arginine biosynthesis. Has no activity with either L-ornithine or L-aspartate as substrate. Also has no detectable AOTCase activity, being unable to convert N(2)-acetyl-L-ornithine to N(2)-acetyl-L-citrulline. This Bacteroides thetaiotaomicron (strain ATCC 29148 / DSM 2079 / JCM 5827 / CCUG 10774 / NCTC 10582 / VPI-5482 / E50) protein is N-succinylornithine carbamoyltransferase.